A 199-amino-acid polypeptide reads, in one-letter code: Pyridoxine/pyridoxamine 5'-phosphate oxidase (199 aa).

FMN-binding positions include Arg-44–Lys-49, Tyr-59–Thr-60, Lys-66, and Gln-91. Lys-49 serves as a coordination point for substrate. The substrate site is built by Tyr-109, Arg-113, and Ser-117. Residues Gln-126–Ser-127 and Trp-171 contribute to the FMN site. Residue Arg-177–His-179 participates in substrate binding. FMN is bound at residue Arg-181.

Belongs to the pyridoxamine 5'-phosphate oxidase family. In terms of assembly, homodimer. FMN serves as cofactor.

The catalysed reaction is pyridoxamine 5'-phosphate + O2 + H2O = pyridoxal 5'-phosphate + H2O2 + NH4(+). It catalyses the reaction pyridoxine 5'-phosphate + O2 = pyridoxal 5'-phosphate + H2O2. The protein operates within cofactor metabolism; pyridoxal 5'-phosphate salvage; pyridoxal 5'-phosphate from pyridoxamine 5'-phosphate: step 1/1. Its pathway is cofactor metabolism; pyridoxal 5'-phosphate salvage; pyridoxal 5'-phosphate from pyridoxine 5'-phosphate: step 1/1. Catalyzes the oxidation of either pyridoxine 5'-phosphate (PNP) or pyridoxamine 5'-phosphate (PMP) into pyridoxal 5'-phosphate (PLP). The sequence is that of Pyridoxine/pyridoxamine 5'-phosphate oxidase from Xanthomonas euvesicatoria pv. vesicatoria (strain 85-10) (Xanthomonas campestris pv. vesicatoria).